Here is a 388-residue protein sequence, read N- to C-terminus: MEPSPTTGGSETTRLVGPRDRGGAGGGLRLKSLFTEAPEPLPEEPKPVEMSFHHCHRDPLPQPGLTPERMQAQRQLCTACAVCCVFMAGEVVGGYLAHSLAIMTDAAHLLADVGSMMGSLFSLWLSTRPATRTMTFGWHRSETLGALASVVSLWMVTGILLYLAFIRLLHSDYHIEGGAMLLTASIAVCANLLMAFVLHQAGPPHSHGSRGAEYAPLEEGSGEPLPLGNTSVRAAFVHVLGDLLQSLGVLIASILIYFKPQYKAADPISTFLFSICALGSTAPTLRDVLRVLMEGTPRSVSFEPVRDTLLSVPGVRAIHELHLWSLTFTHYVASAHLAIDSTADPEAVLAEATSRLHSRFGFSSCTLQVEQYQPEMAQCLRCQEPPQA.

Polar residues predominate over residues 1–13 (MEPSPTTGGSETT). Disordered regions lie at residues 1–30 (MEPS…GLRL) and 35–54 (TEAP…SFHH). Over 1 to 75 (MEPSPTTGGS…TPERMQAQRQ (75 aa)) the chain is Cytoplasmic. The chain crosses the membrane as a helical span at residues 76–96 (LCTACAVCCVFMAGEVVGGYL). At 97 to 105 (AHSLAIMTD) the chain is on the lumenal side. The chain crosses the membrane as a helical span at residues 106-126 (AAHLLADVGSMMGSLFSLWLS). Positions 108 and 112 each coordinate Zn(2+). Over 127–145 (TRPATRTMTFGWHRSETLG) the chain is Cytoplasmic. The chain crosses the membrane as a helical span at residues 146-166 (ALASVVSLWMVTGILLYLAFI). At 167–177 (RLLHSDYHIEG) the chain is on the lumenal side. The chain crosses the membrane as a helical span at residues 178 to 198 (GAMLLTASIAVCANLLMAFVL). The Cytoplasmic segment spans residues 199-235 (HQAGPPHSHGSRGAEYAPLEEGSGEPLPLGNTSVRAA). A helical membrane pass occupies residues 236–256 (FVHVLGDLLQSLGVLIASILI). 2 residues coordinate Zn(2+): histidine 238 and aspartate 242. The Lumenal segment spans residues 257–264 (YFKPQYKA). The chain crosses the membrane as a helical span at residues 265-285 (ADPISTFLFSICALGSTAPTL). At 286-388 (RDVLRVLMEG…CLRCQEPPQA (103 aa)) the chain is on the cytoplasmic side.

The protein belongs to the cation diffusion facilitator (CDF) transporter (TC 2.A.4) family. SLC30A subfamily. Homodimer. Homodimerization could regulate efficiency of zinc transport. Interacts with TMEM163.

The protein localises to the cytoplasmic vesicle. It localises to the secretory vesicle. Its subcellular location is the synaptic vesicle membrane. It is found in the synapse. The protein resides in the synaptosome. The protein localises to the late endosome membrane. It localises to the lysosome membrane. The catalysed reaction is Zn(2+)(in) + 2 H(+)(out) = Zn(2+)(out) + 2 H(+)(in). Its function is as follows. Probable proton-coupled zinc ion antiporter mediating the import of zinc from cytoplasm into synaptic vesicles and participating to cellular zinc ion homeostasis in the brain. This Bos taurus (Bovine) protein is Probable proton-coupled zinc antiporter SLC30A3.